Here is a 345-residue protein sequence, read N- to C-terminus: Uroporphyrinogen decarboxylase (345 aa).

Substrate contacts are provided by residues 27-31 (RQAGR), Asp-77, Tyr-152, Ser-207, and His-323.

The protein belongs to the uroporphyrinogen decarboxylase family. As to quaternary structure, homodimer.

It localises to the cytoplasm. It catalyses the reaction uroporphyrinogen III + 4 H(+) = coproporphyrinogen III + 4 CO2. Its pathway is porphyrin-containing compound metabolism; protoporphyrin-IX biosynthesis; coproporphyrinogen-III from 5-aminolevulinate: step 4/4. In terms of biological role, catalyzes the decarboxylation of four acetate groups of uroporphyrinogen-III to yield coproporphyrinogen-III. The polypeptide is Uroporphyrinogen decarboxylase (Maricaulis maris (strain MCS10) (Caulobacter maris)).